The following is a 570-amino-acid chain: Vacuolar protein sorting-associated protein 45 (570 aa).

Phosphoserine is present on residues S307 and S441.

The protein belongs to the STXBP/unc-18/SEC1 family. In terms of assembly, interacts with STX6 and ZFYVE20. Ubiquitous; expression was highest in testis and in brain. Detected in every part of the brain.

It is found in the golgi apparatus membrane. Its subcellular location is the endosome membrane. Its function is as follows. May play a role in vesicle-mediated protein trafficking from the Golgi stack through the trans-Golgi network. This chain is Vacuolar protein sorting-associated protein 45 (Vps45), found in Rattus norvegicus (Rat).